We begin with the raw amino-acid sequence, 192 residues long: Putative metal-sulfur cluster biosynthesis proteins YuaD (192 aa).

An MOSC domain is found at 15–179; that stretch reads ADTKSFVTKQ…VYTGDEIEVH (165 aa).

In Bacillus subtilis (strain 168), this protein is Putative metal-sulfur cluster biosynthesis proteins YuaD (yuaD).